Here is a 98-residue protein sequence, read N- to C-terminus: NADH-ubiquinone oxidoreductase chain 4L (98 aa).

A run of 3 helical transmembrane segments spans residues 2–22 (QMTMINMILAFIMATTGLLMF), 26–46 (FMSSLLCLEGMMLSIFILMSI), and 59–79 (FPLVLLVFAACEAAIGLSLLV).

This sequence belongs to the complex I subunit 4L family. In terms of assembly, core subunit of respiratory chain NADH dehydrogenase (Complex I) which is composed of 45 different subunits.

It is found in the mitochondrion inner membrane. The enzyme catalyses a ubiquinone + NADH + 5 H(+)(in) = a ubiquinol + NAD(+) + 4 H(+)(out). Its function is as follows. Core subunit of the mitochondrial membrane respiratory chain NADH dehydrogenase (Complex I) which catalyzes electron transfer from NADH through the respiratory chain, using ubiquinone as an electron acceptor. Part of the enzyme membrane arm which is embedded in the lipid bilayer and involved in proton translocation. The chain is NADH-ubiquinone oxidoreductase chain 4L (MT-ND4L) from Echinosorex gymnura (Moon rat).